Reading from the N-terminus, the 303-residue chain is Methionyl-tRNA formyltransferase (303 aa).

110–113 (SLLP) contributes to the (6S)-5,6,7,8-tetrahydrofolate binding site.

Belongs to the Fmt family.

It carries out the reaction L-methionyl-tRNA(fMet) + (6R)-10-formyltetrahydrofolate = N-formyl-L-methionyl-tRNA(fMet) + (6S)-5,6,7,8-tetrahydrofolate + H(+). Its function is as follows. Attaches a formyl group to the free amino group of methionyl-tRNA(fMet). The formyl group appears to play a dual role in the initiator identity of N-formylmethionyl-tRNA by promoting its recognition by IF2 and preventing the misappropriation of this tRNA by the elongation apparatus. This chain is Methionyl-tRNA formyltransferase, found in Campylobacter lari (strain RM2100 / D67 / ATCC BAA-1060).